The primary structure comprises 130 residues: Small ribosomal subunit protein uS8 (130 aa).

The protein belongs to the universal ribosomal protein uS8 family.

The polypeptide is Small ribosomal subunit protein uS8 (RPS22) (Kluyveromyces marxianus (Yeast)).